The primary structure comprises 457 residues: Putative purine-cytosine permease YxlA (457 aa).

Transmembrane regions (helical) follow at residues 24–44 (FPVWFGANMHITTLVTGTIPV), 50–70 (LFWSVAAIICGTLIGAIFMAS), 90–110 (FGVIGAILPLFLVMFIYLGFF), 127–147 (IPGSWSIIGLSAVCFLLTIFG), 164–184 (AVFFAATILIFQLPIPAGSWI), 192–212 (IFLVAVSAVATWQLAYAPYVA), 228–248 (FWYSYAGTSVSSIWMMLLGAL), 264–284 (IVQLFGPFSFIMLIIVLFGQM), 316–336 (IIMILGVTLVGTVLSLLGQSN), 341–361 (FLNFIFFISYFLIPWTAINLV), 392–412 (IAFVLSILLEIPFINTSFYIG), and 420–440 (GGDIAWIIGLAVPSVLYYVLM).

Belongs to the purine-cytosine permease (2.A.39) family.

It is found in the cell membrane. This Bacillus subtilis (strain 168) protein is Putative purine-cytosine permease YxlA (yxlA).